Here is a 273-residue protein sequence, read N- to C-terminus: Formamidopyrimidine-DNA glycosylase (273 aa).

The Schiff-base intermediate with DNA role is filled by Pro-2. The Proton donor role is filled by Glu-3. The active-site Proton donor; for beta-elimination activity is the Lys-58. His-92, Arg-111, and Arg-153 together coordinate DNA. The FPG-type zinc-finger motif lies at 238–272; it reads RVYGREGQKCFNCSSTILKTKNSGRSTFYCKTCQY. Arg-262 acts as the Proton donor; for delta-elimination activity in catalysis.

This sequence belongs to the FPG family. Monomer. Requires Zn(2+) as cofactor.

It carries out the reaction Hydrolysis of DNA containing ring-opened 7-methylguanine residues, releasing 2,6-diamino-4-hydroxy-5-(N-methyl)formamidopyrimidine.. The catalysed reaction is 2'-deoxyribonucleotide-(2'-deoxyribose 5'-phosphate)-2'-deoxyribonucleotide-DNA = a 3'-end 2'-deoxyribonucleotide-(2,3-dehydro-2,3-deoxyribose 5'-phosphate)-DNA + a 5'-end 5'-phospho-2'-deoxyribonucleoside-DNA + H(+). Involved in base excision repair of DNA damaged by oxidation or by mutagenic agents. Acts as a DNA glycosylase that recognizes and removes damaged bases. Has a preference for oxidized purines, such as 7,8-dihydro-8-oxoguanine (8-oxoG). Has AP (apurinic/apyrimidinic) lyase activity and introduces nicks in the DNA strand. Cleaves the DNA backbone by beta-delta elimination to generate a single-strand break at the site of the removed base with both 3'- and 5'-phosphates. The protein is Formamidopyrimidine-DNA glycosylase of Rickettsia canadensis (strain McKiel).